An 878-amino-acid polypeptide reads, in one-letter code: Staphylococcal nuclease domain-containing protein 1 (878 aa).

TNase-like domains lie at 3 to 142 (QYVS…IWGP) and 167 to 312 (KKLN…IWKN). Ser-316 is modified (phosphoserine). 2 consecutive TNase-like domains span residues 326-464 (KDYS…MWSG) and 493-626 (RKLS…MWHD). In terms of domain architecture, Tudor spans 695–755 (KINVGMNVAA…SSLPDTYTKL (61 aa)).

It localises to the cytoplasm. Its subcellular location is the cytosol. The chain is Staphylococcal nuclease domain-containing protein 1 from Schizosaccharomyces pombe (strain 972 / ATCC 24843) (Fission yeast).